Reading from the N-terminus, the 208-residue chain is MLKVIDHPLIKQKLSVIRSQKAGHDVFRKNVIEIASLMTYEVFRNYKLKEIKIDTPVAQDVLAYDYDKEIVIVAILRAGLAMVPGIVNLLPKARVGHIGIFRDEKTFEPNNYFYKIPDVPKDSEILIVDPMLATGNSAVYAIERLKKDGFKNIRLLSLVGVQEGVDNIEKNVGKDFPIFLGSLDEKLNDKKYIVPGLGDAGDRIFGTK.

Residues Arg-77, Arg-102, and 129–137 contribute to the 5-phospho-alpha-D-ribose 1-diphosphate site; that span reads DPMLATGNS. Uracil is bound by residues Ile-193 and 198-200; that span reads GDA. Residue Asp-199 participates in 5-phospho-alpha-D-ribose 1-diphosphate binding.

This sequence belongs to the UPRTase family. The cofactor is Mg(2+).

The catalysed reaction is UMP + diphosphate = 5-phospho-alpha-D-ribose 1-diphosphate + uracil. It participates in pyrimidine metabolism; UMP biosynthesis via salvage pathway; UMP from uracil: step 1/1. Allosterically activated by GTP. In terms of biological role, catalyzes the conversion of uracil and 5-phospho-alpha-D-ribose 1-diphosphate (PRPP) to UMP and diphosphate. In Mycoplasmopsis pulmonis (strain UAB CTIP) (Mycoplasma pulmonis), this protein is Uracil phosphoribosyltransferase.